The following is a 198-amino-acid chain: Recombination protein RecR (198 aa).

The C4-type zinc-finger motif lies at 57-72 (CEKCNTFTEAQICEVC). In terms of domain architecture, Toprim spans 80–175 (TLLCVVETPA…AVTRLARGVP (96 aa)).

This sequence belongs to the RecR family.

In terms of biological role, may play a role in DNA repair. It seems to be involved in an RecBC-independent recombinational process of DNA repair. It may act with RecF and RecO. The polypeptide is Recombination protein RecR (Paraburkholderia xenovorans (strain LB400)).